Here is a 164-residue protein sequence, read N- to C-terminus: Phosphopantetheine adenylyltransferase (164 aa).

Position 9 (T9) interacts with substrate. ATP contacts are provided by residues 9-10 and H17; that span reads TF. Residues K41, L78, and R92 each coordinate substrate. Residues 93–95, E103, and 128–134 each bind ATP; these read GLR and RQAIASK.

It belongs to the bacterial CoaD family. Homohexamer. Requires Mg(2+) as cofactor.

Its subcellular location is the cytoplasm. The catalysed reaction is (R)-4'-phosphopantetheine + ATP + H(+) = 3'-dephospho-CoA + diphosphate. It participates in cofactor biosynthesis; coenzyme A biosynthesis; CoA from (R)-pantothenate: step 4/5. Its function is as follows. Reversibly transfers an adenylyl group from ATP to 4'-phosphopantetheine, yielding dephospho-CoA (dPCoA) and pyrophosphate. In Paracoccus denitrificans (strain Pd 1222), this protein is Phosphopantetheine adenylyltransferase.